Consider the following 134-residue polypeptide: Arsenate reductase (134 aa).

Catalysis depends on nucleophile residues Cys-11, Cys-83, and Cys-90. Disulfide bonds link Cys-11/Cys-83 and Cys-83/Cys-90.

Belongs to the low molecular weight phosphotyrosine protein phosphatase family. Thioredoxin-coupled ArsC subfamily.

The protein localises to the cytoplasm. The enzyme catalyses arsenate + [thioredoxin]-dithiol + H(+) = arsenite + [thioredoxin]-disulfide + H2O. Its function is as follows. Catalyzes the reduction of arsenate [As(V)] to arsenite [As(III)]. The chain is Arsenate reductase from Bacillus cereus (strain 03BB102).